The primary structure comprises 427 residues: Histidine--tRNA ligase (427 aa).

Belongs to the class-II aminoacyl-tRNA synthetase family. In terms of assembly, homodimer.

It is found in the cytoplasm. The enzyme catalyses tRNA(His) + L-histidine + ATP = L-histidyl-tRNA(His) + AMP + diphosphate + H(+). This is Histidine--tRNA ligase from Chloroherpeton thalassium (strain ATCC 35110 / GB-78).